The sequence spans 432 residues: Adenylosuccinate synthetase (432 aa).

GTP contacts are provided by residues G13 to K19 and G41 to T43. D14 acts as the Proton acceptor in catalysis. D14 and G41 together coordinate Mg(2+). IMP is bound by residues D14–K17, N39–H42, T130, R144, Q225, T240, and R304. The active-site Proton donor is the H42. A substrate-binding site is contributed by A300–R306. GTP is bound by residues R306, K332–D334, and S415–G417.

The protein belongs to the adenylosuccinate synthetase family. In terms of assembly, homodimer. Requires Mg(2+) as cofactor.

Its subcellular location is the cytoplasm. It catalyses the reaction IMP + L-aspartate + GTP = N(6)-(1,2-dicarboxyethyl)-AMP + GDP + phosphate + 2 H(+). It participates in purine metabolism; AMP biosynthesis via de novo pathway; AMP from IMP: step 1/2. In terms of biological role, plays an important role in the de novo pathway of purine nucleotide biosynthesis. Catalyzes the first committed step in the biosynthesis of AMP from IMP. The polypeptide is Adenylosuccinate synthetase (Haemophilus influenzae (strain PittEE)).